A 77-amino-acid chain; its full sequence is uncharacterized protein (77 aa).

This is an uncharacterized protein from Homo sapiens (Human).